Consider the following 143-residue polypeptide: Ribonuclease P protein component 2 (143 aa).

Belongs to the eukaryotic/archaeal RNase P protein component 2 family. Consists of a catalytic RNA component and at least 4-5 protein subunits.

It localises to the cytoplasm. It carries out the reaction Endonucleolytic cleavage of RNA, removing 5'-extranucleotides from tRNA precursor.. In terms of biological role, part of ribonuclease P, a protein complex that generates mature tRNA molecules by cleaving their 5'-ends. The polypeptide is Ribonuclease P protein component 2 (Saccharolobus islandicus (strain L.S.2.15 / Lassen #1) (Sulfolobus islandicus)).